A 564-amino-acid polypeptide reads, in one-letter code: Proline--tRNA ligase (564 aa).

The protein belongs to the class-II aminoacyl-tRNA synthetase family. ProS type 1 subfamily. Homodimer.

The protein resides in the cytoplasm. The catalysed reaction is tRNA(Pro) + L-proline + ATP = L-prolyl-tRNA(Pro) + AMP + diphosphate. Catalyzes the attachment of proline to tRNA(Pro) in a two-step reaction: proline is first activated by ATP to form Pro-AMP and then transferred to the acceptor end of tRNA(Pro). As ProRS can inadvertently accommodate and process non-cognate amino acids such as alanine and cysteine, to avoid such errors it has two additional distinct editing activities against alanine. One activity is designated as 'pretransfer' editing and involves the tRNA(Pro)-independent hydrolysis of activated Ala-AMP. The other activity is designated 'posttransfer' editing and involves deacylation of mischarged Ala-tRNA(Pro). The misacylated Cys-tRNA(Pro) is not edited by ProRS. This Bacillus subtilis (strain 168) protein is Proline--tRNA ligase.